Here is a 163-residue protein sequence, read N- to C-terminus: HTH-type transcriptional regulator IscR (163 aa).

One can recognise an HTH rrf2-type domain in the interval 2 to 131 (RLTSKGRYAV…NNITLGELVN (130 aa)). The segment at residues 28-51 (LADISERQGISLSYLEQLFSRLRK) is a DNA-binding region (H-T-H motif). The [2Fe-2S] cluster site is built by cysteine 92, cysteine 98, and cysteine 104.

[2Fe-2S] cluster serves as cofactor.

In terms of biological role, regulates the transcription of several operons and genes involved in the biogenesis of Fe-S clusters and Fe-S-containing proteins. This Klebsiella pneumoniae (strain 342) protein is HTH-type transcriptional regulator IscR.